Consider the following 153-residue polypeptide: Insulin-like growth factor 1 (153 aa).

The segment at 49–77 (GPETLCGAELVDALQFVCGPRGFYFNKPT) is b. 3 cysteine pairs are disulfide-bonded: C54/C96, C66/C109, and C95/C100. Residues 78–89 (GYGSSIRRAPQT) form a c region. The tract at residues 90 to 110 (GIVDECCFRSCDLRRLEMYCA) is a. The segment at 111–118 (PLKPTKSA) is d. Residues 119-153 (RSIRAQRHTDMPKTQKEVHLKNTSRGSAGNKTYRM) constitute a propeptide, e peptide. Residues 119–153 (RSIRAQRHTDMPKTQKEVHLKNTSRGSAGNKTYRM) are disordered. The segment covering 125–138 (RHTDMPKTQKEVHL) has biased composition (basic and acidic residues). Positions 139 to 153 (KNTSRGSAGNKTYRM) are enriched in polar residues.

This sequence belongs to the insulin family. As to quaternary structure, forms a ternary complex with IGFR1 and ITGAV:ITGB3. Forms a ternary complex with IGFR1 and ITGA6:ITGB4. Forms a ternary complex with IGFBP3 and ALS.

It is found in the secreted. The insulin-like growth factors, isolated from plasma, are structurally and functionally related to insulin but have a much higher growth-promoting activity. May be a physiological regulator of [1-14C]-2-deoxy-D-glucose (2DG) transport and glycogen synthesis in osteoblasts. Stimulates glucose transport in bone-derived osteoblastic (PyMS) cells and is effective at much lower concentrations than insulin, not only regarding glycogen and DNA synthesis but also with regard to enhancing glucose uptake. May play a role in synapse maturation. Ca(2+)-dependent exocytosis of IGF1 is required for sensory perception of smell in the olfactory bulb. Acts as a ligand for IGF1R. Binds to the alpha subunit of IGF1R, leading to the activation of the intrinsic tyrosine kinase activity which autophosphorylates tyrosine residues in the beta subunit thus initiating a cascade of down-stream signaling events leading to activation of the PI3K-AKT/PKB and the Ras-MAPK pathways. Binds to integrins ITGAV:ITGB3 and ITGA6:ITGB4. Its binding to integrins and subsequent ternary complex formation with integrins and IGFR1 are essential for IGF1 signaling. Induces the phosphorylation and activation of IGFR1, MAPK3/ERK1, MAPK1/ERK2 and AKT1. As part of the MAPK/ERK signaling pathway, acts as a negative regulator of apoptosis in cardiomyocytes via promotion of STUB1/CHIP-mediated ubiquitination and degradation of ICER-type isoforms of CREM. The polypeptide is Insulin-like growth factor 1 (Rattus norvegicus (Rat)).